Here is a 404-residue protein sequence, read N- to C-terminus: Cysteine desulfurase IscS (404 aa).

Pyridoxal 5'-phosphate contacts are provided by residues 73-74 (AT), Asn-153, Gln-181, and 201-203 (SAH). N6-(pyridoxal phosphate)lysine is present on Lys-204. Thr-241 contacts pyridoxal 5'-phosphate. The active-site Cysteine persulfide intermediate is the Cys-327. Position 327 (Cys-327) interacts with [2Fe-2S] cluster.

It belongs to the class-V pyridoxal-phosphate-dependent aminotransferase family. NifS/IscS subfamily. As to quaternary structure, homodimer. Forms a heterotetramer with IscU, interacts with other sulfur acceptors. It depends on pyridoxal 5'-phosphate as a cofactor.

Its subcellular location is the cytoplasm. It carries out the reaction (sulfur carrier)-H + L-cysteine = (sulfur carrier)-SH + L-alanine. The protein operates within cofactor biosynthesis; iron-sulfur cluster biosynthesis. Functionally, master enzyme that delivers sulfur to a number of partners involved in Fe-S cluster assembly, tRNA modification or cofactor biosynthesis. Catalyzes the removal of elemental sulfur atoms from cysteine to produce alanine. Functions as a sulfur delivery protein for Fe-S cluster synthesis onto IscU, an Fe-S scaffold assembly protein, as well as other S acceptor proteins. The protein is Cysteine desulfurase IscS of Anaeromyxobacter sp. (strain Fw109-5).